The following is a 140-amino-acid chain: Nucleoside diphosphate kinase (140 aa).

ATP-binding residues include K11, F59, R87, T93, R104, and N114. H117 (pros-phosphohistidine intermediate) is an active-site residue.

Belongs to the NDK family. Homotetramer. The cofactor is Mg(2+).

The protein localises to the cytoplasm. It carries out the reaction a 2'-deoxyribonucleoside 5'-diphosphate + ATP = a 2'-deoxyribonucleoside 5'-triphosphate + ADP. It catalyses the reaction a ribonucleoside 5'-diphosphate + ATP = a ribonucleoside 5'-triphosphate + ADP. Functionally, major role in the synthesis of nucleoside triphosphates other than ATP. The ATP gamma phosphate is transferred to the NDP beta phosphate via a ping-pong mechanism, using a phosphorylated active-site intermediate. This is Nucleoside diphosphate kinase from Sinorhizobium fredii (strain NBRC 101917 / NGR234).